The sequence spans 297 residues: Golgi-associated RAB2 interactor protein 1A (297 aa).

Residues 226-257 (SNRHQTSRDRHTDTATETDNSGNCKSTPLVAS) are disordered. Polar residues predominate over residues 240–257 (ATETDNSGNCKSTPLVAS).

It belongs to the GARIN family. As to quaternary structure, interacts (via N-terminus) with RAB2B (in GTP-bound form). As to expression, expressed in testis (at protein level).

It is found in the golgi apparatus. RAB2B effector protein required for accurate acrosome formation and normal male fertility. In Mus musculus (Mouse), this protein is Golgi-associated RAB2 interactor protein 1A.